Consider the following 316-residue polypeptide: Ribosomal RNA large subunit methyltransferase F (316 aa).

Belongs to the methyltransferase superfamily. METTL16/RlmF family.

The protein localises to the cytoplasm. The enzyme catalyses adenosine(1618) in 23S rRNA + S-adenosyl-L-methionine = N(6)-methyladenosine(1618) in 23S rRNA + S-adenosyl-L-homocysteine + H(+). Specifically methylates the adenine in position 1618 of 23S rRNA. The sequence is that of Ribosomal RNA large subunit methyltransferase F from Pseudomonas putida (strain GB-1).